The following is a 514-amino-acid chain: MSVSKKPMVLVILDGYGYREEQQDNAIFSAKTPVMDALWANRPHTLIDASGLEVGLPDRQMGNSEVGHVNLGAGRIVYQDLTRLDVEIKDRVFFANPVLTGAVDKAKSAGKAVHIMGLLSAGGVHSHEDHIMAMVELAAERGAEKIYLHAFLDGRDTPPRSAESSLKKFEEKFAALGKGRVASIIGRYYAMDRDNRWDRVEKAYDLLTLAQGEFQADTAVAGLQAAYARDENDEFVKATVIRAEGQPDAAMEDGDALIFMNFRADRAREITRAFVNADFDGFARKKVVNVDFVMLTEYAADIKTAVAYPPASLVNTFGEWMAKNDKTQLRISETEKYAHVTFFFNGGVEESFKGEDRILINSPKVATYDLQPEMSSAELTEKLVAAIKSGKYDTIICNYPNGDMVGHTGVMEAAVKAVEALDHCVDEVAKAVESVGGQLLITADHGNAEQMRDPATGQAHTAHTNLPVPLIYVGDKNVKAVEGGKLSDIAPTMLSLMGMEIPQEMTGKPLFIVE.

Residues Asp-14 and Ser-64 each contribute to the Mn(2+) site. The active-site Phosphoserine intermediate is the Ser-64. Residues His-125, 155–156, Arg-187, Arg-193, 263–266, and Lys-336 contribute to the substrate site; these read RD and RADR. The Mn(2+) site is built by Asp-403, His-407, Asp-444, His-445, and His-463.

Belongs to the BPG-independent phosphoglycerate mutase family. Monomer. The cofactor is Mn(2+).

The enzyme catalyses (2R)-2-phosphoglycerate = (2R)-3-phosphoglycerate. It participates in carbohydrate degradation; glycolysis; pyruvate from D-glyceraldehyde 3-phosphate: step 3/5. Functionally, catalyzes the interconversion of 2-phosphoglycerate and 3-phosphoglycerate. The chain is 2,3-bisphosphoglycerate-independent phosphoglycerate mutase from Shigella dysenteriae serotype 1 (strain Sd197).